The chain runs to 343 residues: Hydroxycarboxylic acid receptor 1 (343 aa).

The Extracellular portion of the chain corresponds to Met1–Leu21. Asn3 is a glycosylation site (N-linked (GlcNAc...) asparagine). Residues Leu22–Phe42 form a helical membrane-spanning segment. Topologically, residues His43 to Ser49 are cytoplasmic. Residues Ser50–Leu70 form a helical membrane-spanning segment. Residues Arg71 to Leu90 are Extracellular-facing. Cys88 and Cys165 are oxidised to a cystine. The helical transmembrane segment at Val91–Val111 threads the bilayer. Residues Asp112–Thr131 lie on the Cytoplasmic side of the membrane. Residues Ala132–Met152 traverse the membrane as a helical segment. The Extracellular segment spans residues Glu153–Gln182. The helical transmembrane segment at Leu183–Leu203 threads the bilayer. At Arg204–Arg220 the chain is on the cytoplasmic side. The chain crosses the membrane as a helical span at residues Phe221–Leu241. Residues Tyr242–Ala259 are Extracellular-facing. The chain crosses the membrane as a helical span at residues Leu260–Phe280. The Cytoplasmic portion of the chain corresponds to Ser281–Cys343. Residues Cys319–Ser334 are compositionally biased toward polar residues. Residues Cys319 to Cys343 form a disordered region.

This sequence belongs to the G-protein coupled receptor 1 family. As to expression, highly expressed in subcutaneous fat and omental fat and detectable in lower levels in brain and many other tissues. High levels detected in epididymal and subcutaneous fat with slightly lower in omental fat, low levels are detected in the brain, skeletal muscle, kidney, liver and the pancreas (at protein level).

Its subcellular location is the cell membrane. Functionally, acts as a receptor for L-lactate and mediates its anti-lipolytic effect through a G(i)-protein-mediated pathway. This is Hydroxycarboxylic acid receptor 1 (Hcar1) from Mus musculus (Mouse).